The chain runs to 458 residues: UDP-glycosyltransferase 76G1 (458 aa).

His25 acts as the Proton acceptor in catalysis. His25 provides a ligand contact to rebaudioside A. Position 25 (His25) interacts with rubusoside. Asn27 is a binding site for UDP. The Charge relay role is filled by Asp124. Rebaudioside A contacts are provided by residues 146–147 and His155; that span reads TS. UDP-binding positions include Ser283, 338-339, and 356-364; these read WV and HSGWNSTLE. Rebaudioside A contacts are provided by residues Trp359 and 380 to 381; that span reads DQ.

It belongs to the UDP-glycosyltransferase family. As to quaternary structure, monomer.

The catalysed reaction is steviolbioside + UDP-alpha-D-glucose = rebaudioside B + UDP + H(+). It catalyses the reaction stevioside + UDP-alpha-D-glucose = rebaudioside A + UDP + H(+). It carries out the reaction rebaudioside E + UDP-alpha-D-glucose = rebaudioside D + UDP + H(+). The enzyme catalyses rebaudioside D + UDP-alpha-D-glucose = rebaudioside M + UDP + H(+). Its function is as follows. Involved in the biosynthesis of steviol glycosides in leaves. Converts the di-glycoside steviolbioside to the tri-glycoside rebaudioside B. Converts the tri-glycoside stevioside to the tetra-glycoside rebaudioside A. Converts the tetra-glycoside rebaudioside E to the penta-glycoside rebaudioside D. Converts the penta-glycoside rebaudioside D to the hexa-glycoside rebaudioside M. Can glucosylate rubusoside and rebaudioside A in vitro. This Stevia rebaudiana (Stevia) protein is UDP-glycosyltransferase 76G1.